The sequence spans 439 residues: Tol-Pal system protein TolB (439 aa).

The N-terminal stretch at 1 to 24 (MRNGMRKIIAGVFIFVFLISNLYA) is a signal peptide.

This sequence belongs to the TolB family. The Tol-Pal system is composed of five core proteins: the inner membrane proteins TolA, TolQ and TolR, the periplasmic protein TolB and the outer membrane protein Pal. They form a network linking the inner and outer membranes and the peptidoglycan layer.

The protein resides in the periplasm. Part of the Tol-Pal system, which plays a role in outer membrane invagination during cell division and is important for maintaining outer membrane integrity. This is Tol-Pal system protein TolB from Francisella tularensis subsp. tularensis (strain FSC 198).